We begin with the raw amino-acid sequence, 99 residues long: Complement inhibitor RaCI7 (99 aa).

The signal sequence occupies residues 1–24; that stretch reads MAALNGLVLLLLTISAMFISECYS. Intrachain disulfides connect Cys-37/Cys-61, Cys-42/Cys-63, and Cys-57/Cys-78.

This sequence belongs to the RaCI family. Expressed in salivary glands.

It is found in the secreted. Functionally, complement inhibitor. Prevents complement-mediated C5 activation by binding to C5. Binds C5 at a different binding site than the other tick complement inhibitors OmCI and CirpT1, and the drug eculizumab. The protein is Complement inhibitor RaCI7 of Dermacentor andersoni (Rocky mountain wood tick).